A 345-amino-acid polypeptide reads, in one-letter code: MNIFTRYHLPRVVSGVILPLFLFHLLPYVTCQQESVPTNSIRQTNLSADSIIAIVVLAIFISLGMVSCCLHCIFYREEIGAAGQDVLHSRARRGLEKEVIESFPTFLYSEVKGLKIGKGGVECAICLSEFEDQETLRWMPPCSHTFHANCIDVWLSSWSTCPVCRANLSLKPGESYPYLNMDVETGGVQKLPNERSLTGNSVTTRSRSTGLLSSWRMAEIFVPRSHSTGHSLVQQLGENLDRFTLQLPEEVQRQLVSLNLIRRSHIVLPQAVSSRQGYRSGSVGSERGGFSQGRQTHRRALSMSFSFSFQTASVRSIHDMNDQAQAKDKYFGERSFERLMPEEKV.

The N-terminal stretch at 1-31 (MNIFTRYHLPRVVSGVILPLFLFHLLPYVTC) is a signal peptide. The chain crosses the membrane as a helical span at residues 50–70 (SIIAIVVLAIFISLGMVSCCL). The segment at 123-165 (CAICLSEFEDQETLRWMPPCSHTFHANCIDVWLSSWSTCPVCR) adopts an RING-type; atypical zinc-finger fold. Serine 264 carries the post-translational modification Phosphoserine.

This sequence belongs to the RING-type zinc finger family. ATL subfamily.

It is found in the membrane. The catalysed reaction is S-ubiquitinyl-[E2 ubiquitin-conjugating enzyme]-L-cysteine + [acceptor protein]-L-lysine = [E2 ubiquitin-conjugating enzyme]-L-cysteine + N(6)-ubiquitinyl-[acceptor protein]-L-lysine.. It functions in the pathway protein modification; protein ubiquitination. This chain is Putative RING-H2 finger protein ATL36 (ATL36), found in Arabidopsis thaliana (Mouse-ear cress).